The following is an 86-amino-acid chain: Putative membrane protein insertion efficiency factor (86 aa).

The protein belongs to the UPF0161 family.

It is found in the cell inner membrane. Its function is as follows. Could be involved in insertion of integral membrane proteins into the membrane. In Histophilus somni (strain 129Pt) (Haemophilus somnus), this protein is Putative membrane protein insertion efficiency factor.